The following is a 284-amino-acid chain: Putative ABC transporter ATP-binding protein tll2439 (284 aa).

The 237-residue stretch at 6–242 (LEFHQVGFRY…WPTFAPELGT (237 aa)) folds into the ABC transporter domain. Residue 40 to 47 (GLNGSGKS) coordinates ATP.

Belongs to the ABC transporter superfamily.

It is found in the cell inner membrane. In terms of biological role, probably part of an ABC transporter complex. Responsible for energy coupling to the transport system. The chain is Putative ABC transporter ATP-binding protein tll2439 from Thermosynechococcus vestitus (strain NIES-2133 / IAM M-273 / BP-1).